Consider the following 457-residue polypeptide: Ribosomal protein uS12 methylthiotransferase RimO (457 aa).

Positions 30 to 140 (PTIGMVSLGC…VLDAVHGAVP (111 aa)) constitute an MTTase N-terminal domain. 6 residues coordinate [4Fe-4S] cluster: Cys39, Cys75, Cys104, Cys171, Cys175, and Cys178. The Radical SAM core domain occupies 157-386 (LTPRHFSYLK…MQKAQAISEA (230 aa)). A TRAM domain is found at 389-456 (AARIGQRLEV…EYDLWGRAVL (68 aa)).

It belongs to the methylthiotransferase family. RimO subfamily. It depends on [4Fe-4S] cluster as a cofactor.

It is found in the cytoplasm. The catalysed reaction is L-aspartate(89)-[ribosomal protein uS12]-hydrogen + (sulfur carrier)-SH + AH2 + 2 S-adenosyl-L-methionine = 3-methylsulfanyl-L-aspartate(89)-[ribosomal protein uS12]-hydrogen + (sulfur carrier)-H + 5'-deoxyadenosine + L-methionine + A + S-adenosyl-L-homocysteine + 2 H(+). Functionally, catalyzes the methylthiolation of an aspartic acid residue of ribosomal protein uS12. This chain is Ribosomal protein uS12 methylthiotransferase RimO, found in Cereibacter sphaeroides (strain ATCC 17025 / ATH 2.4.3) (Rhodobacter sphaeroides).